We begin with the raw amino-acid sequence, 257 residues long: tRNA (guanine-N(1)-)-methyltransferase (257 aa).

S-adenosyl-L-methionine contacts are provided by residues G112 and L136–L141.

It belongs to the RNA methyltransferase TrmD family. As to quaternary structure, homodimer.

It is found in the cytoplasm. It carries out the reaction guanosine(37) in tRNA + S-adenosyl-L-methionine = N(1)-methylguanosine(37) in tRNA + S-adenosyl-L-homocysteine + H(+). Specifically methylates guanosine-37 in various tRNAs. This chain is tRNA (guanine-N(1)-)-methyltransferase, found in Salinispora arenicola (strain CNS-205).